Reading from the N-terminus, the 280-residue chain is Pantothenate synthetase (280 aa).

An ATP-binding site is contributed by Met26–His33. The Proton donor role is filled by His33. (R)-pantoate is bound at residue Gln57. Beta-alanine is bound at residue Gln57. Gly145 to Asp148 is a binding site for ATP. Position 151 (Gln151) interacts with (R)-pantoate. Residues Val174 and Leu182–Arg185 each bind ATP.

It belongs to the pantothenate synthetase family. In terms of assembly, homodimer.

Its subcellular location is the cytoplasm. The catalysed reaction is (R)-pantoate + beta-alanine + ATP = (R)-pantothenate + AMP + diphosphate + H(+). It participates in cofactor biosynthesis; (R)-pantothenate biosynthesis; (R)-pantothenate from (R)-pantoate and beta-alanine: step 1/1. Catalyzes the condensation of pantoate with beta-alanine in an ATP-dependent reaction via a pantoyl-adenylate intermediate. The polypeptide is Pantothenate synthetase (Bordetella avium (strain 197N)).